A 453-amino-acid polypeptide reads, in one-letter code: Glucose N-acetyltransferase 1-B (453 aa).

Over 1–8 the chain is Cytoplasmic; the sequence is MLKRKVRY. A helical; Signal-anchor for type II membrane protein transmembrane segment spans residues 9-29; that stretch reads LLLIVVVFTGIILSVEAIMRF. Residues 30–453 are Lumenal-facing; it reads QLNKNVDYYL…LESRAICQVN (424 aa). N-linked (GlcNAc...) asparagine glycans are attached at residues N108, N126, and N176. The DXD motif lies at 187–189; sequence DND.

This sequence belongs to the GNT1 family.

It localises to the golgi apparatus membrane. The protein localises to the vacuole membrane. In terms of biological role, N-acetylglucosaminyltransferase involved in the Golgi-specific modification of N-linked glycans. The polypeptide is Glucose N-acetyltransferase 1-B (GNT1-B) (Kluyveromyces lactis (strain ATCC 8585 / CBS 2359 / DSM 70799 / NBRC 1267 / NRRL Y-1140 / WM37) (Yeast)).